A 341-amino-acid polypeptide reads, in one-letter code: Ribosomal RNA small subunit methyltransferase C (341 aa).

It belongs to the methyltransferase superfamily. RsmC family. Monomer.

The protein resides in the cytoplasm. The catalysed reaction is guanosine(1207) in 16S rRNA + S-adenosyl-L-methionine = N(2)-methylguanosine(1207) in 16S rRNA + S-adenosyl-L-homocysteine + H(+). In terms of biological role, specifically methylates the guanine in position 1207 of 16S rRNA in the 30S particle. This Shewanella halifaxensis (strain HAW-EB4) protein is Ribosomal RNA small subunit methyltransferase C.